A 118-amino-acid chain; its full sequence is Small ribosomal subunit protein uS13 (118 aa).

The segment at 92-118 is disordered; the sequence is RKGLPVRGQRTKTNARTRKGPRKPIRK.

It belongs to the universal ribosomal protein uS13 family. As to quaternary structure, part of the 30S ribosomal subunit. Forms a loose heterodimer with protein S19. Forms two bridges to the 50S subunit in the 70S ribosome.

Its function is as follows. Located at the top of the head of the 30S subunit, it contacts several helices of the 16S rRNA. In the 70S ribosome it contacts the 23S rRNA (bridge B1a) and protein L5 of the 50S subunit (bridge B1b), connecting the 2 subunits; these bridges are implicated in subunit movement. Contacts the tRNAs in the A and P-sites. The chain is Small ribosomal subunit protein uS13 from Pseudomonas putida (strain ATCC 700007 / DSM 6899 / JCM 31910 / BCRC 17059 / LMG 24140 / F1).